A 731-amino-acid chain; its full sequence is Ubiquitin carboxyl-terminal hydrolase 17 (731 aa).

Residues C57, C60, C68, C71, C77, C81, H90, and C94 each coordinate Zn(2+). An MYND-type zinc finger spans residues 57-94; the sequence is CAVCLYPTTTRCSQCKSVRYCSSKCQILHWRRGHKEEC. 2 disordered regions span residues 171–219 and 262–281; these read YETR…DSAN and LPSKANSKPKVSQASSSGLK. Composition is skewed to polar residues over residues 207–219 and 265–281; these read GNQNSRRSGDSAN and KANSKPKVSQASSSGLK. A USP domain is found at 329-633; it reads FGLVNLGNSC…GAYMLLYARD (305 aa). C338 acts as the Nucleophile in catalysis. Catalysis depends on H592, which acts as the Proton acceptor. Positions 637-702 are disordered; sequence PVSKNGGRKS…TSSCSTKDSS (66 aa). Over residues 677 to 701 the composition is skewed to low complexity; it reads DWSSGSLSSMFSSSDTTSSCSTKDS.

Belongs to the peptidase C19 family.

The enzyme catalyses Thiol-dependent hydrolysis of ester, thioester, amide, peptide and isopeptide bonds formed by the C-terminal Gly of ubiquitin (a 76-residue protein attached to proteins as an intracellular targeting signal).. Functionally, recognizes and hydrolyzes the peptide bond at the C-terminal Gly of ubiquitin. Involved in the processing of poly-ubiquitin precursors as well as that of ubiquitinated proteins. The chain is Ubiquitin carboxyl-terminal hydrolase 17 (UBP17) from Arabidopsis thaliana (Mouse-ear cress).